A 389-amino-acid polypeptide reads, in one-letter code: MPLPTNQLRLAMVAGEPSGDLLAASLLGGLRERLPESAQYYGIGGQRMIAQGFDSHWQMDKLTVRGYVEALGQIPEILRIRGELKRQLLAERPAAFIGVDAPDFNFNVEQAARDAGIPSIHFVCPSIWAWRGGRIKKIAKSVDHMLCLFPFEPAILDKAGVASTYVGHPLADDIPLEPDTHGARIALGLPADGPVIAVLPGSRRSEIALIGPTFFAAMALMQQREPGVRFVMPAATPALRELLQPLVDAHPQLALTITDGRSQVAMTAADAILVKSGTVTLEAALLKKPMVISYKVPWLTGQIMRRQGYLPYVGLPNILAGRFVVPELLQHFATPEALADATLTQLSDDANRRTLTEVFTEMHLSLRQNTAAKAAEAVVRVLEQRKGRA.

It belongs to the LpxB family.

It catalyses the reaction a lipid X + a UDP-2-N,3-O-bis[(3R)-3-hydroxyacyl]-alpha-D-glucosamine = a lipid A disaccharide + UDP + H(+). It functions in the pathway bacterial outer membrane biogenesis; LPS lipid A biosynthesis. Functionally, condensation of UDP-2,3-diacylglucosamine and 2,3-diacylglucosamine-1-phosphate to form lipid A disaccharide, a precursor of lipid A, a phosphorylated glycolipid that anchors the lipopolysaccharide to the outer membrane of the cell. The sequence is that of Lipid-A-disaccharide synthase from Burkholderia cenocepacia (strain HI2424).